The chain runs to 179 residues: Ribosome maturation factor RimM (179 aa).

The 74-residue stretch at 103-176 (EPDTYYDHQL…IVEIDPPKGL (74 aa)) folds into the PRC barrel domain.

This sequence belongs to the RimM family. As to quaternary structure, binds ribosomal protein uS19.

Its subcellular location is the cytoplasm. Its function is as follows. An accessory protein needed during the final step in the assembly of 30S ribosomal subunit, possibly for assembly of the head region. Essential for efficient processing of 16S rRNA. May be needed both before and after RbfA during the maturation of 16S rRNA. It has affinity for free ribosomal 30S subunits but not for 70S ribosomes. This chain is Ribosome maturation factor RimM, found in Mycobacterium leprae (strain Br4923).